Reading from the N-terminus, the 439-residue chain is Trigger factor (439 aa).

A PPIase FKBP-type domain is found at 175–260 (SDKLVIDYQN…VKSVYVMKGM (86 aa)).

The protein belongs to the FKBP-type PPIase family. Tig subfamily.

The protein resides in the cytoplasm. The catalysed reaction is [protein]-peptidylproline (omega=180) = [protein]-peptidylproline (omega=0). Its function is as follows. Involved in protein export. Acts as a chaperone by maintaining the newly synthesized protein in an open conformation. Functions as a peptidyl-prolyl cis-trans isomerase. This is Trigger factor from Ehrlichia chaffeensis (strain ATCC CRL-10679 / Arkansas).